Reading from the N-terminus, the 227-residue chain is Ribosome-recycling factor, chloroplastic (227 aa).

The transit peptide at 1 to 34 directs the protein to the chloroplast; that stretch reads WTAAANYVKIKVGTGKFARKTVVLSQKRTGTLKC. Positions 167–212 form a coiled coil; it reads KVALRNIRRDAIKSYDKLEKEKKLSEDNVKDLSSDLQKVIDEYIKK.

It belongs to the RRF family.

It is found in the plastid. The protein resides in the chloroplast. Functionally, responsible for the release of ribosomes from messenger RNA at the termination of chloroplastic protein biosynthesis. This Daucus carota (Wild carrot) protein is Ribosome-recycling factor, chloroplastic (RRF).